The following is a 510-amino-acid chain: Maturase K (510 aa).

It belongs to the intron maturase 2 family. MatK subfamily.

Its subcellular location is the plastid. Usually encoded in the trnK tRNA gene intron. Probably assists in splicing its own and other chloroplast group II introns. This Aneura mirabilis (Parasitic liverwort) protein is Maturase K.